The sequence spans 151 residues: Transcriptional repressor NrdR (151 aa).

A zinc finger lies at 3–34; it reads CPFCHNDQSRVIDSRVIDSGSAIRRRRECTQC. An ATP-cone domain is found at 46–136; sequence LLVVKRNGLT…VYKSFESADD (91 aa).

The protein belongs to the NrdR family. Zn(2+) serves as cofactor.

In terms of biological role, negatively regulates transcription of bacterial ribonucleotide reductase nrd genes and operons by binding to NrdR-boxes. The sequence is that of Transcriptional repressor NrdR from Corynebacterium diphtheriae (strain ATCC 700971 / NCTC 13129 / Biotype gravis).